Reading from the N-terminus, the 208-residue chain is FMN-dependent NADH:quinone oxidoreductase 4 (208 aa).

Belongs to the azoreductase type 1 family. As to quaternary structure, homodimer. FMN is required as a cofactor.

The enzyme catalyses 2 a quinone + NADH + H(+) = 2 a 1,4-benzosemiquinone + NAD(+). It catalyses the reaction N,N-dimethyl-1,4-phenylenediamine + anthranilate + 2 NAD(+) = 2-(4-dimethylaminophenyl)diazenylbenzoate + 2 NADH + 2 H(+). In terms of biological role, quinone reductase that provides resistance to thiol-specific stress caused by electrophilic quinones. Functionally, also exhibits azoreductase activity. Catalyzes the reductive cleavage of the azo bond in aromatic azo compounds to the corresponding amines. This chain is FMN-dependent NADH:quinone oxidoreductase 4, found in Bacillus cereus (strain ATCC 10987 / NRS 248).